The chain runs to 155 residues: Small ribosomal subunit protein uS15 (155 aa).

A compositionally biased stretch (basic residues) spans 1-10; sequence MARMHTRRRG. The tract at residues 1–66 is disordered; that stretch reads MARMHTRRRG…EGVQGTPVPD (66 aa). A compositionally biased stretch (acidic residues) spans 21–33; that stretch reads EPPEWSDVDEDAI. A compositionally biased stretch (basic and acidic residues) spans 34-45; the sequence is EERVVELAEQGH.

It belongs to the universal ribosomal protein uS15 family. As to quaternary structure, part of the 30S ribosomal subunit.

The polypeptide is Small ribosomal subunit protein uS15 (Halobacterium salinarum (strain ATCC 700922 / JCM 11081 / NRC-1) (Halobacterium halobium)).